The chain runs to 194 residues: dITP/XTP pyrophosphatase (194 aa).

Residue 8 to 13 (TKNKGK) participates in substrate binding. Glu-41 and Asp-70 together coordinate Mg(2+). Asp-70 acts as the Proton acceptor in catalysis. Substrate is bound by residues Ser-71, 153–156 (FGYD), Lys-176, and 181–182 (HR).

It belongs to the HAM1 NTPase family. In terms of assembly, homodimer. Mg(2+) serves as cofactor.

The enzyme catalyses XTP + H2O = XMP + diphosphate + H(+). It carries out the reaction dITP + H2O = dIMP + diphosphate + H(+). The catalysed reaction is ITP + H2O = IMP + diphosphate + H(+). In terms of biological role, pyrophosphatase that catalyzes the hydrolysis of nucleoside triphosphates to their monophosphate derivatives, with a high preference for the non-canonical purine nucleotides XTP (xanthosine triphosphate), dITP (deoxyinosine triphosphate) and ITP. Seems to function as a house-cleaning enzyme that removes non-canonical purine nucleotides from the nucleotide pool, thus preventing their incorporation into DNA/RNA and avoiding chromosomal lesions. The chain is dITP/XTP pyrophosphatase from Halalkalibacterium halodurans (strain ATCC BAA-125 / DSM 18197 / FERM 7344 / JCM 9153 / C-125) (Bacillus halodurans).